The following is a 569-amino-acid chain: Proline--tRNA ligase (569 aa).

The protein belongs to the class-II aminoacyl-tRNA synthetase family. ProS type 1 subfamily. As to quaternary structure, homodimer.

The protein localises to the cytoplasm. It carries out the reaction tRNA(Pro) + L-proline + ATP = L-prolyl-tRNA(Pro) + AMP + diphosphate. Its function is as follows. Catalyzes the attachment of proline to tRNA(Pro) in a two-step reaction: proline is first activated by ATP to form Pro-AMP and then transferred to the acceptor end of tRNA(Pro). As ProRS can inadvertently accommodate and process non-cognate amino acids such as alanine and cysteine, to avoid such errors it has two additional distinct editing activities against alanine. One activity is designated as 'pretransfer' editing and involves the tRNA(Pro)-independent hydrolysis of activated Ala-AMP. The other activity is designated 'posttransfer' editing and involves deacylation of mischarged Ala-tRNA(Pro). The misacylated Cys-tRNA(Pro) is not edited by ProRS. This Legionella pneumophila (strain Lens) protein is Proline--tRNA ligase.